A 203-amino-acid polypeptide reads, in one-letter code: Recombination protein RecR (203 aa).

A C4-type zinc finger spans residues 57 to 72 (CQRCRTLAETPLCSIC). A Toprim domain is found at 80–175 (GLLCVVESPA…RLSRLAYGVP (96 aa)).

This sequence belongs to the RecR family.

May play a role in DNA repair. It seems to be involved in an RecBC-independent recombinational process of DNA repair. It may act with RecF and RecO. This chain is Recombination protein RecR, found in Chromohalobacter salexigens (strain ATCC BAA-138 / DSM 3043 / CIP 106854 / NCIMB 13768 / 1H11).